The sequence spans 498 residues: Glycerol kinase (498 aa).

Threonine 12 provides a ligand contact to ADP. Positions 12, 13, and 14 each coordinate ATP. Threonine 12 lines the sn-glycerol 3-phosphate pocket. Residue arginine 16 participates in ADP binding. Sn-glycerol 3-phosphate-binding residues include arginine 82, glutamate 83, tyrosine 134, and aspartate 243. Glycerol contacts are provided by arginine 82, glutamate 83, tyrosine 134, aspartate 243, and glutamine 244. Positions 265 and 308 each coordinate ADP. ATP is bound by residues threonine 265, glycine 308, glutamine 312, and glycine 411. Glycine 411 contacts ADP.

It belongs to the FGGY kinase family.

The catalysed reaction is glycerol + ATP = sn-glycerol 3-phosphate + ADP + H(+). It functions in the pathway polyol metabolism; glycerol degradation via glycerol kinase pathway; sn-glycerol 3-phosphate from glycerol: step 1/1. Its activity is regulated as follows. Inhibited by fructose 1,6-bisphosphate (FBP). Functionally, key enzyme in the regulation of glycerol uptake and metabolism. Catalyzes the phosphorylation of glycerol to yield sn-glycerol 3-phosphate. The sequence is that of Glycerol kinase from Brucella suis biovar 1 (strain 1330).